The sequence spans 31 residues: Cytochrome b6-f complex subunit 6 (31 aa).

Residues 4–24 traverse the membrane as a helical segment; it reads ITSYFGFLLAALTITSALFIG.

It belongs to the PetL family. The 4 large subunits of the cytochrome b6-f complex are cytochrome b6, subunit IV (17 kDa polypeptide, PetD), cytochrome f and the Rieske protein, while the 4 small subunits are PetG, PetL, PetM and PetN. The complex functions as a dimer.

Its subcellular location is the plastid. It is found in the chloroplast thylakoid membrane. Its function is as follows. Component of the cytochrome b6-f complex, which mediates electron transfer between photosystem II (PSII) and photosystem I (PSI), cyclic electron flow around PSI, and state transitions. PetL is important for photoautotrophic growth as well as for electron transfer efficiency and stability of the cytochrome b6-f complex. The sequence is that of Cytochrome b6-f complex subunit 6 from Solanum tuberosum (Potato).